The primary structure comprises 123 residues: Small ribosomal subunit protein uS12 (123 aa).

Residues 1-45 form a disordered region; sequence MPTINQLIRKKRQSGATRKKSPALQKSPQKRGVCLQVKTKTPKKP. A compositionally biased stretch (basic residues) spans 8–21; the sequence is IRKKRQSGATRKKS.

This sequence belongs to the universal ribosomal protein uS12 family. In terms of assembly, part of the 30S ribosomal subunit. Contacts proteins S8 and S17. May interact with IF1 in the 30S initiation complex.

Its function is as follows. With S4 and S5 plays an important role in translational accuracy. In terms of biological role, interacts with and stabilizes bases of the 16S rRNA that are involved in tRNA selection in the A site and with the mRNA backbone. Located at the interface of the 30S and 50S subunits, it traverses the body of the 30S subunit contacting proteins on the other side and probably holding the rRNA structure together. The combined cluster of proteins S8, S12 and S17 appears to hold together the shoulder and platform of the 30S subunit. The sequence is that of Small ribosomal subunit protein uS12 from Chlamydia muridarum (strain MoPn / Nigg).